The chain runs to 312 residues: Aspartate carbamoyltransferase catalytic subunit (312 aa).

Residues R62 and T63 each coordinate carbamoyl phosphate. An L-aspartate-binding site is contributed by K90. Positions 112, 140, and 143 each coordinate carbamoyl phosphate. Positions 173 and 228 each coordinate L-aspartate. Carbamoyl phosphate-binding residues include G269 and P270.

Belongs to the aspartate/ornithine carbamoyltransferase superfamily. ATCase family. In terms of assembly, heterododecamer (2C3:3R2) of six catalytic PyrB chains organized as two trimers (C3), and six regulatory PyrI chains organized as three dimers (R2).

It catalyses the reaction carbamoyl phosphate + L-aspartate = N-carbamoyl-L-aspartate + phosphate + H(+). Its pathway is pyrimidine metabolism; UMP biosynthesis via de novo pathway; (S)-dihydroorotate from bicarbonate: step 2/3. Functionally, catalyzes the condensation of carbamoyl phosphate and aspartate to form carbamoyl aspartate and inorganic phosphate, the committed step in the de novo pyrimidine nucleotide biosynthesis pathway. This is Aspartate carbamoyltransferase catalytic subunit from Deinococcus geothermalis (strain DSM 11300 / CIP 105573 / AG-3a).